Here is a 450-residue protein sequence, read N- to C-terminus: Putative zinc metalloprotease TP_0600 (450 aa).

Histidine 18 is a binding site for Zn(2+). Glutamate 19 is an active-site residue. Histidine 22 contributes to the Zn(2+) binding site. Residues 102-124 form a helical membrane-spanning segment; that stretch reads IAFAGPLANVLMAVMVLALVSAL. Residues 200 to 278 form the PDZ domain; that stretch reads TITPDRDAHT…SVVLTVLRSG (79 aa). 2 helical membrane-spanning segments follow: residues 384–406 and 421–443; these read VCVS…LILF and VLYY…AFWN.

The protein belongs to the peptidase M50B family. It depends on Zn(2+) as a cofactor.

The protein localises to the cell inner membrane. This is Putative zinc metalloprotease TP_0600 from Treponema pallidum (strain Nichols).